The following is a 528-amino-acid chain: MLSRTILFSTSFLWVRVANAAFGITTSDDSYVIDAGSANSLKFTVSRSSCDITSINYYGSELQYSGTGSHIGSGLGSADVSAVEDGDYIKVTCDTDTLTQYFVVHNGDSVIHMATYTTEEPSVGELRFIARLNSELLPNEEPFGDVSTTSGGEAIEGSDVFLVDGETRSKFYSSQRFIDDQRHCVAGDAHRVCMILNQYETSSGGPFFRDINSNNGGSYNSLYWYMNSGHVQTEDRRQGLHGPYSMYFSRSGTPSTDIDTSFFANLDIKGYVAADGRGTVSGTASGADSSFKWVVHWYNADAQYWTYTSSDGSFTSPAMKPGDYTMVYYQGEYKVAETSVSVTAGSSTSKDISGFVETGDTIFKIGDWDGTPTGFRNAENQLRMHPSDSRMSSWGPLTYTVGSSELTDFPMAAFKGVNDPVTIKFTATSAQTGAATLRIGTTLSFAGGRPQATINDYEGSAPSAPTNLNSRGVTRGAYRGLGEVYDVNIPSGTIVEGENTITISVISGSSGDEFLAPNFIFDCVELFQ.

Positions 1-20 are cleaved as a signal peptide; it reads MLSRTILFSTSFLWVRVANA. Intrachain disulfides connect Cys-50-Cys-93 and Cys-184-Cys-193.

It belongs to the polysaccharide lyase 4 family.

It is found in the secreted. The catalysed reaction is Endotype eliminative cleavage of L-alpha-rhamnopyranosyl-(1-&gt;4)-alpha-D-galactopyranosyluronic acid bonds of rhamnogalacturonan I domains in ramified hairy regions of pectin leaving L-rhamnopyranose at the reducing end and 4-deoxy-4,5-unsaturated D-galactopyranosyluronic acid at the non-reducing end.. In terms of biological role, pectinolytic enzymes consist of four classes of enzymes: pectin lyase, polygalacturonase, pectin methylesterase and rhamnogalacturonase. Degrades the rhamnogalacturonan I (RG-I) backbone of pectin. The sequence is that of Probable rhamnogalacturonate lyase A (rglA) from Aspergillus flavus (strain ATCC 200026 / FGSC A1120 / IAM 13836 / NRRL 3357 / JCM 12722 / SRRC 167).